A 317-amino-acid chain; its full sequence is Eukaryotic translation initiation factor 2 subunit 2 (317 aa).

The tract at residues 1–146 is disordered; the sequence is MSATEEENVL…KEKTITTSDG (146 aa). The span at 79 to 90 shows a compositional bias: basic and acidic residues; it reads AIEKLENEGAHD. Positions 109-125 are enriched in low complexity; it reads KSSTTTTTSTTTTTTEP. The C4-type zinc-finger motif lies at 222-246; it reads HVYNYVFAELGTNGSIDGNQRLVIR.

It belongs to the eIF-2-beta/eIF-5 family. In terms of assembly, eukaryotic translation initiation factor 2 eIF2 is a heterotrimeric complex composed of an alpha, a beta and a gamma subunit.

It is found in the cytoplasm. The protein localises to the cytosol. In terms of biological role, component of the eIF2 complex that functions in the early steps of protein synthesis by forming a ternary complex with GTP and initiator tRNA. This complex binds to a 40S ribosomal subunit, followed by mRNA binding to form a 43S pre-initiation complex (43S PIC). Junction of the 60S ribosomal subunit to form the 80S initiation complex is preceded by hydrolysis of the GTP bound to eIF2 and release of an eIF2-GDP binary complex. In order for eIF2 to recycle and catalyze another round of initiation, the GDP bound to eIF2 must exchange with GTP by way of a reaction catalyzed by eIF2B. This chain is Eukaryotic translation initiation factor 2 subunit 2 (eif2s2), found in Dictyostelium discoideum (Social amoeba).